The primary structure comprises 257 residues: Flap endonuclease Xni (257 aa).

Asp-112 lines the Mg(2+) pocket. One can recognise a 5'-3' exonuclease domain in the interval 169-256 (EQKKLVEFWA…LGFSLKQLRL (88 aa)). K(+) is bound by residues Phe-179, Ala-180, Pro-188, Val-190, and Ile-193. The tract at residues 192 to 197 (GIGTKS) is interaction with DNA.

Belongs to the Xni family. The cofactor is Mg(2+). It depends on K(+) as a cofactor.

Its function is as follows. Has flap endonuclease activity. During DNA replication, flap endonucleases cleave the 5'-overhanging flap structure that is generated by displacement synthesis when DNA polymerase encounters the 5'-end of a downstream Okazaki fragment. The polypeptide is Flap endonuclease Xni (Pseudoalteromonas translucida (strain TAC 125)).